A 252-amino-acid chain; its full sequence is Thiazole synthase (252 aa).

The active-site Schiff-base intermediate with DXP is lysine 91. 1-deoxy-D-xylulose 5-phosphate contacts are provided by residues glycine 152, alanine 179–glycine 180, and asparagine 201–threonine 202.

Belongs to the ThiG family. Homotetramer. Forms heterodimers with either ThiH or ThiS.

Its subcellular location is the cytoplasm. It catalyses the reaction [ThiS sulfur-carrier protein]-C-terminal-Gly-aminoethanethioate + 2-iminoacetate + 1-deoxy-D-xylulose 5-phosphate = [ThiS sulfur-carrier protein]-C-terminal Gly-Gly + 2-[(2R,5Z)-2-carboxy-4-methylthiazol-5(2H)-ylidene]ethyl phosphate + 2 H2O + H(+). It functions in the pathway cofactor biosynthesis; thiamine diphosphate biosynthesis. Its function is as follows. Catalyzes the rearrangement of 1-deoxy-D-xylulose 5-phosphate (DXP) to produce the thiazole phosphate moiety of thiamine. Sulfur is provided by the thiocarboxylate moiety of the carrier protein ThiS. In vitro, sulfur can be provided by H(2)S. The protein is Thiazole synthase of Erwinia amylovora (Fire blight bacteria).